The following is a 642-amino-acid chain: Threonine--tRNA ligase (642 aa).

The region spanning 1 to 61 is the TGS domain; sequence MPVITLPDGS…DTDSELSIIT (61 aa). Positions 243–534 are catalytic; the sequence is DHRKIGKQLD…LIEEYAGKFP (292 aa). Positions 334, 385, and 511 each coordinate Zn(2+).

It belongs to the class-II aminoacyl-tRNA synthetase family. As to quaternary structure, homodimer. It depends on Zn(2+) as a cofactor.

It is found in the cytoplasm. The catalysed reaction is tRNA(Thr) + L-threonine + ATP = L-threonyl-tRNA(Thr) + AMP + diphosphate + H(+). Functionally, catalyzes the attachment of threonine to tRNA(Thr) in a two-step reaction: L-threonine is first activated by ATP to form Thr-AMP and then transferred to the acceptor end of tRNA(Thr). Also edits incorrectly charged L-seryl-tRNA(Thr). The chain is Threonine--tRNA ligase from Shewanella piezotolerans (strain WP3 / JCM 13877).